Here is a 246-residue protein sequence, read N- to C-terminus: tRNA (guanine-N(1)-)-methyltransferase (246 aa).

S-adenosyl-L-methionine contacts are provided by residues Gly113 and 132 to 137 (LGDYVL).

Belongs to the RNA methyltransferase TrmD family. Homodimer.

The protein localises to the cytoplasm. It catalyses the reaction guanosine(37) in tRNA + S-adenosyl-L-methionine = N(1)-methylguanosine(37) in tRNA + S-adenosyl-L-homocysteine + H(+). Its function is as follows. Specifically methylates guanosine-37 in various tRNAs. The chain is tRNA (guanine-N(1)-)-methyltransferase from Lactiplantibacillus plantarum (strain ATCC BAA-793 / NCIMB 8826 / WCFS1) (Lactobacillus plantarum).